The chain runs to 227 residues: Cytidylate kinase (227 aa).

Position 12 to 20 (12 to 20) interacts with ATP; the sequence is GPSGAGKGT.

Belongs to the cytidylate kinase family. Type 1 subfamily.

The protein resides in the cytoplasm. It catalyses the reaction CMP + ATP = CDP + ADP. The enzyme catalyses dCMP + ATP = dCDP + ADP. The protein is Cytidylate kinase of Sodalis glossinidius (strain morsitans).